The chain runs to 29 residues: Trypsin inhibitor 3 (29 aa).

Intrachain disulfides connect cysteine 3-cysteine 20, cysteine 10-cysteine 22, and cysteine 16-cysteine 28.

Belongs to the protease inhibitor I7 (squash-type serine protease inhibitor) family.

It is found in the secreted. Inhibits trypsin. This chain is Trypsin inhibitor 3, found in Luffa aegyptiaca (Sponge gourd).